The sequence spans 4076 residues: E3 ubiquitin-protein ligase TOM1-like (4076 aa).

Residues serine 225–alanine 237 show a composition bias toward low complexity. Disordered regions lie at residues serine 225–alanine 256, tyrosine 288–proline 360, isoleucine 748–serine 819, leucine 921–alanine 970, serine 1083–threonine 1103, methionine 1571–glutamate 1646, proline 1988–isoleucine 2041, asparagine 2067–lysine 2110, glutamate 2275–serine 2295, serine 2356–tyrosine 2551, glycine 2581–proline 2634, isoleucine 2782–histidine 2817, glutamate 2858–aspartate 2955, glutamate 3037–leucine 3066, arginine 3105–threonine 3132, lysine 3216–glycine 3241, and glutamate 3353–proline 3444. Basic and acidic residues predominate over residues lysine 238 to threonine 250. Residues threonine 311–proline 320 show a composition bias toward low complexity. The span at arginine 322–glutamate 343 shows a compositional bias: polar residues. The segment covering glutamate 767–aspartate 778 has biased composition (acidic residues). Basic and acidic residues predominate over residues valine 940 to aspartate 950. A compositionally biased stretch (polar residues) spans alanine 959–proline 969. Positions proline 1606–alanine 1620 are enriched in polar residues. The segment covering proline 1621–proline 1632 has biased composition (low complexity). The segment covering alanine 1633–arginine 1642 has biased composition (polar residues). Basic and acidic residues predominate over residues valine 2021–isoleucine 2041. Over residues asparagine 2086 to glutamate 2096 the composition is skewed to polar residues. Over residues serine 2099 to lysine 2110 the composition is skewed to basic and acidic residues. Acidic residues-rich tracts occupy residues aspartate 2378–proline 2387 and glutamate 2405–glutamate 2450. The span at glutamine 2460–glycine 2469 shows a compositional bias: low complexity. Composition is skewed to acidic residues over residues glutamate 2470–aspartate 2516 and glutamate 2523–tyrosine 2551. Basic and acidic residues predominate over residues glutamate 2587–isoleucine 2597. The segment covering aspartate 2598–phenylalanine 2622 has biased composition (acidic residues). Composition is skewed to basic and acidic residues over residues histidine 2788–glutamine 2803 and glutamate 2858–glutamate 2912. The stretch at alanine 2851–alanine 2929 forms a coiled coil. Residues alanine 2913–alanine 2927 are compositionally biased toward low complexity. Positions glutamate 3037–glutamine 3047 are enriched in basic and acidic residues. Residues histidine 3108–serine 3117 are compositionally biased toward polar residues. A coiled-coil region spans residues proline 3341–alanine 3375. Basic and acidic residues predominate over residues glutamate 3353–alanine 3372. A compositionally biased stretch (low complexity) spans alanine 3373 to aspartate 3414. The span at glutamine 3415–isoleucine 3439 shows a compositional bias: basic and acidic residues. The HECT domain occupies lysine 3740 to alanine 4076. The active-site Glycyl thioester intermediate is cysteine 4043.

Belongs to the UPL family. TOM1/PTR1 subfamily.

It is found in the nucleus. It catalyses the reaction S-ubiquitinyl-[E2 ubiquitin-conjugating enzyme]-L-cysteine + [acceptor protein]-L-lysine = [E2 ubiquitin-conjugating enzyme]-L-cysteine + N(6)-ubiquitinyl-[acceptor protein]-L-lysine.. It participates in protein modification; protein ubiquitination. Functionally, probable ubiquitin ligase protein, which may be involved in mRNA export. E3 ubiquitin ligase proteins mediate ubiquitination and subsequent proteasomal degradation of target proteins. Participates in mRNA export from the nucleus by regulating the transport of hnRNP proteins. This Neurospora crassa (strain ATCC 24698 / 74-OR23-1A / CBS 708.71 / DSM 1257 / FGSC 987) protein is E3 ubiquitin-protein ligase TOM1-like.